Consider the following 806-residue polypeptide: Leucine--tRNA ligase (806 aa).

Positions 40–51 (PYPSGQGLHVGH) match the 'HIGH' region motif. A 'KMSKS' region motif is present at residues 578–582 (KMSKS). Residue Lys-581 participates in ATP binding.

The protein belongs to the class-I aminoacyl-tRNA synthetase family.

Its subcellular location is the cytoplasm. The catalysed reaction is tRNA(Leu) + L-leucine + ATP = L-leucyl-tRNA(Leu) + AMP + diphosphate. The protein is Leucine--tRNA ligase of Limosilactobacillus reuteri (strain DSM 20016) (Lactobacillus reuteri).